Reading from the N-terminus, the 96-residue chain is Large ribosomal subunit protein uL23 (96 aa).

The protein belongs to the universal ribosomal protein uL23 family. In terms of assembly, part of the 50S ribosomal subunit. Contacts protein L29, and trigger factor when it is bound to the ribosome.

In terms of biological role, one of the early assembly proteins it binds 23S rRNA. One of the proteins that surrounds the polypeptide exit tunnel on the outside of the ribosome. Forms the main docking site for trigger factor binding to the ribosome. This is Large ribosomal subunit protein uL23 from Syntrophus aciditrophicus (strain SB).